We begin with the raw amino-acid sequence, 728 residues long: 1,4-alpha-glucan branching enzyme GlgB (728 aa).

Asp405 acts as the Nucleophile in catalysis. Glu458 acts as the Proton donor in catalysis.

It belongs to the glycosyl hydrolase 13 family. GlgB subfamily. As to quaternary structure, monomer.

It catalyses the reaction Transfers a segment of a (1-&gt;4)-alpha-D-glucan chain to a primary hydroxy group in a similar glucan chain.. The protein operates within glycan biosynthesis; glycogen biosynthesis. Functionally, catalyzes the formation of the alpha-1,6-glucosidic linkages in glycogen by scission of a 1,4-alpha-linked oligosaccharide from growing alpha-1,4-glucan chains and the subsequent attachment of the oligosaccharide to the alpha-1,6 position. The chain is 1,4-alpha-glucan branching enzyme GlgB from Salmonella paratyphi B (strain ATCC BAA-1250 / SPB7).